The sequence spans 83 residues: Kunitz serine protease inhibitor Pr-mulgin 1 (83 aa).

Residues 1–24 form the signal peptide; it reads MSSGGLLLLLGLLTLWEVLTPVSS. A BPTI/Kunitz inhibitor domain is found at 31-81; that stretch reads CELPADPGPCNGLFQAFYYNPVQRKCLKFRYGGCKGNPNTFKTIEECKRTC. 3 disulfides stabilise this stretch: C31–C81, C40–C64, and C56–C77.

Belongs to the venom Kunitz-type family. In terms of tissue distribution, expressed by the venom gland.

The protein resides in the secreted. Functionally, specifically inhibits MMP2 activity (EC(50)=100 nM and Ki=60 nM). The polypeptide is Kunitz serine protease inhibitor Pr-mulgin 1 (Pseudechis rossignolii (Papuan pigmy mulga snake)).